A 363-amino-acid chain; its full sequence is MKTICLVGGKLQGFEAAYLSKKAGMKVVLVDKNPQALIRNYADEFYCFDVIKEPEKLLELSKRVDAVLPVNENLACIEFLNSIKEKFSCPVLFDFEAYRISRDKKKSKDYFKSIGVPTPQDRPSKPPYFVKPPCESSSVGARIIYDDKDLEGLEPDTLVEEYVEGEVVSLEVVGDGSHFAVVKETLVHIDETYDCHMVTPLPANPLFRQISHDLAANLPLKGIMDVEAIFGPKGLRVIEIDARFPSQTPTVVYYSSGINLIELLFRAFTDGVEEIRAIPENKYCIYEHLMFGENGVLIPVGEQVLSMGSDYGKFYEEPGIEIFLCKGEYPVFTMVFWGKDREETGAKRCKGLSVLKERFGAVL.

Lysine 10 provides a ligand contact to ATP. 11 to 12 (LQ) contributes to the L-lysine binding site. ATP is bound by residues aspartate 31, 49-50 (DV), and 72-73 (EN). An L-lysine-binding site is contributed by glutamate 72. ADP-binding positions include lysine 104, lysine 131, serine 138, and 160-163 (EEYV). D-ornithine-binding positions include 169 to 171 (SLE) and aspartate 225. Residues glutamate 227, glutamate 239, and aspartate 241 each coordinate Mg(2+). An ADP-binding site is contributed by glutamate 239. Residues 243-248 (RFPSQT) and glutamate 302 contribute to the D-ornithine site. The L-lysine site is built by serine 246 and glutamate 302.

Belongs to the PylC family. Mg(2+) serves as cofactor.

It catalyses the reaction (3R)-3-methyl-D-ornithine + L-lysine + ATP = (3R)-3-methyl-D-ornithyl-N(6)-L-lysine + ADP + phosphate + H(+). Its pathway is amino-acid biosynthesis; L-pyrrolysine biosynthesis. Its function is as follows. Is required for the biosynthesis of pyrrolysine. Catalyzes the ATP-dependent ligation between (3R)-3-methyl-D-ornithine and L-lysine, leading to (3R)-3-methyl-D-ornithyl-N6-L-lysine. The chain is 3-methyl-D-ornithine--L-lysine ligase from Methanosarcina barkeri (strain Fusaro / DSM 804).